The following is a 277-amino-acid chain: Undecaprenyl-diphosphatase (277 aa).

The next 7 membrane-spanning stretches (helical) occupy residues 3–23 (YIIE…TEIF), 48–68 (LTLF…IYYF), 97–117 (ISYA…GLLI), 125–145 (LLSI…VFLL), 198–218 (SFLC…YDAI), 227–247 (IPGF…TIKI), and 257–277 (LIWF…LYII).

This sequence belongs to the UppP family.

It is found in the cell membrane. The enzyme catalyses di-trans,octa-cis-undecaprenyl diphosphate + H2O = di-trans,octa-cis-undecaprenyl phosphate + phosphate + H(+). In terms of biological role, catalyzes the dephosphorylation of undecaprenyl diphosphate (UPP). Confers resistance to bacitracin. The protein is Undecaprenyl-diphosphatase of Acholeplasma laidlawii (strain PG-8A).